The chain runs to 156 residues: Endoribonuclease YbeY (156 aa).

Zn(2+)-binding residues include His122, His126, and His132.

Belongs to the endoribonuclease YbeY family. It depends on Zn(2+) as a cofactor.

It localises to the cytoplasm. Single strand-specific metallo-endoribonuclease involved in late-stage 70S ribosome quality control and in maturation of the 3' terminus of the 16S rRNA. The sequence is that of Endoribonuclease YbeY from Pediococcus pentosaceus (strain ATCC 25745 / CCUG 21536 / LMG 10740 / 183-1w).